The chain runs to 370 residues: 4-hydroxy-3-methylbut-2-en-1-yl diphosphate synthase (flavodoxin) (370 aa).

Residues C268, C271, C303, and E310 each contribute to the [4Fe-4S] cluster site.

The protein belongs to the IspG family. Requires [4Fe-4S] cluster as cofactor.

The catalysed reaction is (2E)-4-hydroxy-3-methylbut-2-enyl diphosphate + oxidized [flavodoxin] + H2O + 2 H(+) = 2-C-methyl-D-erythritol 2,4-cyclic diphosphate + reduced [flavodoxin]. It participates in isoprenoid biosynthesis; isopentenyl diphosphate biosynthesis via DXP pathway; isopentenyl diphosphate from 1-deoxy-D-xylulose 5-phosphate: step 5/6. Converts 2C-methyl-D-erythritol 2,4-cyclodiphosphate (ME-2,4cPP) into 1-hydroxy-2-methyl-2-(E)-butenyl 4-diphosphate. The polypeptide is 4-hydroxy-3-methylbut-2-en-1-yl diphosphate synthase (flavodoxin) (Bacillus cereus (strain B4264)).